The chain runs to 93 residues: MRTLILLAAILLAALQAQAELFSVNVDEVLDQQQPGSDQDLVIHLTGEESSALQVPDTKGICACRRRFCPNSERFSGYCRVNGARYVRCCSRR.

A signal peptide spans 1–19 (MRTLILLAAILLAALQAQA). Positions 20–59 (ELFSVNVDEVLDQQQPGSDQDLVIHLTGEESSALQVPDTK) are excised as a propeptide. 3 disulfide bridges follow: Cys62–Cys90, Cys64–Cys79, and Cys69–Cys89.

Belongs to the alpha-defensin family.

It is found in the secreted. Its function is as follows. Microbicidal activity and inhibits corticotropin (ACTH) stimulated corticosterone production. In Oryctolagus cuniculus (Rabbit), this protein is Corticostatin 1.